The chain runs to 224 residues: UPF0758 protein PST_0473 (224 aa).

One can recognise an MPN domain in the interval 102–224 (ALESPQAVRD…PLSMAEYGWM (123 aa)). Positions 173, 175, and 186 each coordinate Zn(2+). Positions 173–186 (HNHPSGVAEPSQAD) match the JAMM motif motif.

This sequence belongs to the UPF0758 family.

The polypeptide is UPF0758 protein PST_0473 (Stutzerimonas stutzeri (strain A1501) (Pseudomonas stutzeri)).